Consider the following 128-residue polypeptide: MANDRRVSRVSSLIKREVSQMLLMEIKDDRVGAGMVSVTDVDLSHDLQHAKIFVSIYGNEDAKAETMAGLKASAGFVRRELGQRIRLRRTPEVVFLEDSSLERGDRMLHLLDHIKTDRPPEDDDSEEE.

Belongs to the RbfA family. In terms of assembly, monomer. Binds 30S ribosomal subunits, but not 50S ribosomal subunits or 70S ribosomes.

The protein localises to the cytoplasm. In terms of biological role, one of several proteins that assist in the late maturation steps of the functional core of the 30S ribosomal subunit. Associates with free 30S ribosomal subunits (but not with 30S subunits that are part of 70S ribosomes or polysomes). Required for efficient processing of 16S rRNA. May interact with the 5'-terminal helix region of 16S rRNA. The sequence is that of Ribosome-binding factor A from Microcystis aeruginosa (strain NIES-843 / IAM M-2473).